A 345-amino-acid chain; its full sequence is D(2) dopamine receptor B (345 aa).

Residues 1 to 10 (EWRFSRIHCD) lie on the Extracellular side of the membrane. The cysteines at positions 9 and 84 are disulfide-linked. Residues 11–32 (IFVTLDVMMCTASILNLCAISI) form a helical membrane-spanning segment. Over 33–53 (DRYTAVAMPMLYNTRYSSKRR) the chain is Cytoplasmic. The chain crosses the membrane as a helical span at residues 54-74 (VTVMISVVWVLSFAISCPLLF). The Extracellular portion of the chain corresponds to 75 to 90 (GLNNTASTVCIIDNPA). A glycan (N-linked (GlcNAc...) asparagine) is linked at Asn77. Residues 91–115 (FVIYSSIVSFYVPFIVTLLVYVQIY) traverse the membrane as a helical segment. Over 116 to 275 (IVLRKRRKRV…SQHKEKKATQ (160 aa)) the chain is Cytoplasmic. The segment covering 166 to 177 (KKKVEAGNHPED) has biased composition (basic and acidic residues). Residues 166-199 (KKKVEAGNHPEDMEMEMMSSTSPPEKTKHKSASP) are disordered. A helical membrane pass occupies residues 276–297 (MLAIVLGVFIICWLPFFITHIL). Residues 298 to 311 (NMHCNCNIPQALYS) are Extracellular-facing. Cys301 and Cys303 are oxidised to a cystine. A helical membrane pass occupies residues 312–333 (AFTWLGYVNSAVNPIIYTTFNV). The Cytoplasmic portion of the chain corresponds to 334 to 345 (EFRKAFIKILHC). Cys345 carries S-palmitoyl cysteine lipidation.

This sequence belongs to the G-protein coupled receptor 1 family. Post-translationally, palmitoylated. Palmitoylation is probably required for proper localization to the plasma membrane and stability of the receptor. As to expression, brain; pituitary.

The protein localises to the cell membrane. It localises to the golgi apparatus membrane. Its function is as follows. This is one of the five types (D1 to D5) of receptors for dopamine. The activity of this receptor is mediated by G proteins which inhibits adenylyl cyclase. In Xenopus D2R is involved in the regulation of the melanotrope cells of the intermediate pituitary during background adaptation of the animal. The protein is D(2) dopamine receptor B (drd2-b) of Xenopus laevis (African clawed frog).